The sequence spans 365 residues: S-adenosylmethionine:tRNA ribosyltransferase-isomerase (365 aa).

The protein belongs to the QueA family. Monomer.

Its subcellular location is the cytoplasm. It carries out the reaction 7-aminomethyl-7-carbaguanosine(34) in tRNA + S-adenosyl-L-methionine = epoxyqueuosine(34) in tRNA + adenine + L-methionine + 2 H(+). It functions in the pathway tRNA modification; tRNA-queuosine biosynthesis. In terms of biological role, transfers and isomerizes the ribose moiety from AdoMet to the 7-aminomethyl group of 7-deazaguanine (preQ1-tRNA) to give epoxyqueuosine (oQ-tRNA). This Rickettsia rickettsii (strain Iowa) protein is S-adenosylmethionine:tRNA ribosyltransferase-isomerase.